The primary structure comprises 52 residues: NAGAPQHLCGSHLVDALYLVCGPSGFFYNPKGIVEQCCHKPCSIFDLQNYCN.

3 disulfide bridges follow: cysteine 9–cysteine 38, cysteine 21–cysteine 51, and cysteine 37–cysteine 42.

The protein belongs to the insulin family. As to quaternary structure, heterodimer of a B chain and an A chain linked by two disulfide bonds.

The protein localises to the secreted. In terms of biological role, insulin decreases blood glucose concentration. It increases cell permeability to monosaccharides, amino acids and fatty acids. It accelerates glycolysis, the pentose phosphate cycle, and glycogen synthesis in liver. This Piaractus mesopotamicus (Small-scaled pacu) protein is Insulin (ins).